The primary structure comprises 565 residues: Adenine deaminase (565 aa).

Belongs to the metallo-dependent hydrolases superfamily. Adenine deaminase family. Requires Mn(2+) as cofactor.

The catalysed reaction is adenine + H2O + H(+) = hypoxanthine + NH4(+). The chain is Adenine deaminase from Sinorhizobium fredii (strain NBRC 101917 / NGR234).